We begin with the raw amino-acid sequence, 413 residues long: MGQLFSSPKSDENNDLPSSFTGYFKKFNTGRKIISQEILNLIELRMRKGNIQLTNSAISDALKEIDSSVLNVAVTGETGSGKSSFINTLRGIGNEEEGAAKTGVVEVTMERHPYKHPNIPNVVFWDLPGIGSTNFPPNTYLEKMKFYEYDFFIIISATRFKKNDIDIAKAISMMKKEFYFVRTKVDSDITNEADGKPQTFDKEKVLQDIRLNCVNTFRENGIAEPPIFLLSNKNVCHYDFPVLMDKLISDLPIYKRHNFMVSLPNITDSVIEKKRQFLKQRIWLEGFAADLVNIIPSLTFLLDSDLETLKKSMKFYRTVFGVDETSLQRLARDWEIEVDQVEAMIKSPAVFKPTDEETIQERLSRYIQEFCLANGYLLPKNSFLKEIFYLKYYFLDMVTEDAKTLLKEICLRN.

Residue Gly-2 is the site of N-myristoyl glycine attachment. The IRG-type G domain maps to 68–250; that stretch reads SVLNVAVTGE…PVLMDKLISD (183 aa). Residues Gly-79, Gly-81, Lys-82, Ser-83, Ser-84, Thr-102, and Gly-103 each contribute to the GDP site. Thr-102 carries the (Microbial infection) Phosphothreonine; by ROP18 modification. Thr-108 is modified ((Microbial infection) Phosphothreonine; by ROP18). Positions 184, 186, 187, and 232 each coordinate GDP. Cys-236 and Cys-410 are joined by a disulfide.

This sequence belongs to the TRAFAC class dynamin-like GTPase superfamily. IRG family. As to quaternary structure, monomer, as apoenzyme and in the GDP-bound form. Homooligomer, upon GTP binding. Interacts with HOOK3. (Microbial infection) Interacts with Toxoplasma gondii GRA7 in GTP-dependent manner; the interaction results in faster turnover of the GTP-activated IIGP1 oligomer. Interacts with T.gondii ROP5; the interaction results in inhibition of IRGA6/IIGP1 GTPase activity and oligomerization. In terms of processing, myristoylated. (Microbial infection) Phosphorylated by Toxoplasma gondii ROP18 from virulent strains.

It localises to the cytoplasm. Its subcellular location is the nucleus membrane. The protein resides in the endoplasmic reticulum membrane. The protein localises to the golgi apparatus. It is found in the golgi stack membrane. It localises to the parasitophorous vacuole membrane. The enzyme catalyses GTP + H2O = GDP + phosphate + H(+). In terms of biological role, GTPase with low activity. Has higher affinity for GDP than for GTP. Plays a role in resistance to intracellular pathogens. During infection with avirulent Toxoplasma gondii strains, recruited to the parasitophorous vacuole membrane. Required for disruption of the parasitophorous vacuole formed following T.gondii infection and subsequent killing of the parasite. Mediates resistance to Chlamydia trachomatis infection by targeting bacterial inclusions to autophagosomes for subsequent lysosomal destruction. The chain is Interferon-inducible GTPase 1 (Iigp1) from Mus musculus (Mouse).